Reading from the N-terminus, the 510-residue chain is NAD(P)H-quinone oxidoreductase subunit 2 A, chloroplastic (510 aa).

13 consecutive transmembrane segments (helical) span residues 24 to 44 (LLLFNGSFIFPECILIFGLIL), 57 to 77 (TPWLYFISSTSLVMSITALLF), 99 to 119 (IFQFLILLCSTLCIPLSVEYI), 124 to 144 (MAITEFLLFVLTATLGGMFLC), 149 to 169 (LITIFVAPECFSLCSYLLSGY), 183 to 203 (YLLMGGASSSILVYGFSWLYG), 229 to 249 (ISIALISITVGIGFKLSPAPF), 295 to 315 (WHLLLEILAILSMILGNLIAI), 323 to 343 (MLAYSSIGQIGYVIIGIIVGD), 354 to 374 (YMLFYISMNLGTFACIVLFGL), 395 to 415 (ALSSALCLLSLGGIPPLAGFF), 418 to 438 (LYLFWCGWQAGLYFLVSIGLL), and 484 to 504 (MIVCVIASTIPGISMNPIIAI).

This sequence belongs to the complex I subunit 2 family. In terms of assembly, NDH is composed of at least 16 different subunits, 5 of which are encoded in the nucleus.

It localises to the plastid. The protein resides in the chloroplast thylakoid membrane. The enzyme catalyses a plastoquinone + NADH + (n+1) H(+)(in) = a plastoquinol + NAD(+) + n H(+)(out). The catalysed reaction is a plastoquinone + NADPH + (n+1) H(+)(in) = a plastoquinol + NADP(+) + n H(+)(out). In terms of biological role, NDH shuttles electrons from NAD(P)H:plastoquinone, via FMN and iron-sulfur (Fe-S) centers, to quinones in the photosynthetic chain and possibly in a chloroplast respiratory chain. The immediate electron acceptor for the enzyme in this species is believed to be plastoquinone. Couples the redox reaction to proton translocation, and thus conserves the redox energy in a proton gradient. This Nuphar advena (Common spatterdock) protein is NAD(P)H-quinone oxidoreductase subunit 2 A, chloroplastic.